Consider the following 364-residue polypeptide: MQDRQKAQDYRALLLADTPLIDVRAPIEFEQGAMPGAINLPLMMDDERAAVGTCYKRQGADAALALGHRLVCGDIRQQRLEAWKAAYQRFPNGYLCCARGGQRSHIVQRWLQETGIDCPLIEGGYKALRQTAIQATWQLAQKPILLIGGCTGSGKTQLVRQQPNGVDLEGLARHRGSSFGRTLNPQLSQASFENKLAVELLKINARQTLKRWVLEDEGRTIGANHLPECLRERMAQAPIAVVEDPFALRLERLREEYFIRMHHDFTHAYGDEAGWQAYSEYLHHGLFAIRRRLGLQRFAELTDTLDRALAEQLSSGSTDGHMAWLVPLLNEYYDPMYRYQLEKKAANIVFRGTWQDVANWLKAQ.

The Rhodanese domain occupies 14 to 137 (LLADTPLIDV…LRQTAIQATW (124 aa)). Residue Cys-97 is the S-selanylcysteine intermediate of the active site. Gly-149 provides a ligand contact to (2E)-geranyl diphosphate.

The protein belongs to the SelU family. In terms of assembly, monomer.

It catalyses the reaction 5-methylaminomethyl-2-thiouridine(34) in tRNA + selenophosphate + (2E)-geranyl diphosphate + H2O + H(+) = 5-methylaminomethyl-2-selenouridine(34) in tRNA + (2E)-thiogeraniol + phosphate + diphosphate. The enzyme catalyses 5-methylaminomethyl-2-thiouridine(34) in tRNA + (2E)-geranyl diphosphate = 5-methylaminomethyl-S-(2E)-geranyl-thiouridine(34) in tRNA + diphosphate. The catalysed reaction is 5-methylaminomethyl-S-(2E)-geranyl-thiouridine(34) in tRNA + selenophosphate + H(+) = 5-methylaminomethyl-2-(Se-phospho)selenouridine(34) in tRNA + (2E)-thiogeraniol. It carries out the reaction 5-methylaminomethyl-2-(Se-phospho)selenouridine(34) in tRNA + H2O = 5-methylaminomethyl-2-selenouridine(34) in tRNA + phosphate. Functionally, involved in the post-transcriptional modification of the uridine at the wobble position (U34) of tRNA(Lys), tRNA(Glu) and tRNA(Gln). Catalyzes the conversion of 2-thiouridine (S2U-RNA) to 2-selenouridine (Se2U-RNA). Acts in a two-step process involving geranylation of 2-thiouridine (S2U) to S-geranyl-2-thiouridine (geS2U) and subsequent selenation of the latter derivative to 2-selenouridine (Se2U) in the tRNA chain. The protein is tRNA 2-selenouridine synthase of Salmonella typhimurium (strain LT2 / SGSC1412 / ATCC 700720).